We begin with the raw amino-acid sequence, 384 residues long: Zinc finger CCCH domain-containing protein 12 (384 aa).

Disordered regions lie at residues 1 to 32 and 46 to 81; these read MSHH…NLGD and WAMN…SAAS. A compositionally biased stretch (polar residues) spans 50 to 60; the sequence is PDNTSGDNNGP. The segment covering 70–81 has biased composition (low complexity); the sequence is SSSSATTTSAAS. 2 consecutive C3H1-type zinc fingers follow at residues 91–118 and 172–200; these read FFKT…HTVE and SFKG…HDEA. Residues 211 to 231 form a disordered region; it reads LGPGGYGSGGGGGSGGGSVGG. Residues 212-231 are compositionally biased toward gly residues; it reads GPGGYGSGGGGGSGGGSVGG. The C3H1-type 3 zinc finger occupies 260 to 288; sequence NWKTRICNKWEITGYCPFGAKCHFAHGAA. Residues 299–335 are disordered; it reads EEEGKDGVSPNPDTKQTVQNPKGLSDTTTLLSPGVPH. The segment covering 309–329 has biased composition (polar residues); that stretch reads NPDTKQTVQNPKGLSDTTTLL.

The protein is Zinc finger CCCH domain-containing protein 12 of Arabidopsis thaliana (Mouse-ear cress).